The following is a 185-amino-acid chain: Ribosome-recycling factor (185 aa).

This sequence belongs to the RRF family.

Its subcellular location is the cytoplasm. Its function is as follows. Responsible for the release of ribosomes from messenger RNA at the termination of protein biosynthesis. May increase the efficiency of translation by recycling ribosomes from one round of translation to another. The chain is Ribosome-recycling factor from Geobacter metallireducens (strain ATCC 53774 / DSM 7210 / GS-15).